We begin with the raw amino-acid sequence, 140 residues long: Large ribosomal subunit protein bL17 (140 aa).

The protein belongs to the bacterial ribosomal protein bL17 family. As to quaternary structure, part of the 50S ribosomal subunit. Contacts protein L32.

In Paramagnetospirillum magneticum (strain ATCC 700264 / AMB-1) (Magnetospirillum magneticum), this protein is Large ribosomal subunit protein bL17.